The chain runs to 155 residues: 6,7-dimethyl-8-ribityllumazine synthase (155 aa).

Residues F23, 57–59, and 80–82 each bind 5-amino-6-(D-ribitylamino)uracil; these read AFE and AVI. Position 85–86 (85–86) interacts with (2S)-2-hydroxy-3-oxobutyl phosphate; the sequence is AT. Catalysis depends on H88, which acts as the Proton donor. Position 113 (Y113) interacts with 5-amino-6-(D-ribitylamino)uracil. A (2S)-2-hydroxy-3-oxobutyl phosphate-binding site is contributed by R127.

Belongs to the DMRL synthase family.

It carries out the reaction (2S)-2-hydroxy-3-oxobutyl phosphate + 5-amino-6-(D-ribitylamino)uracil = 6,7-dimethyl-8-(1-D-ribityl)lumazine + phosphate + 2 H2O + H(+). Its pathway is cofactor biosynthesis; riboflavin biosynthesis; riboflavin from 2-hydroxy-3-oxobutyl phosphate and 5-amino-6-(D-ribitylamino)uracil: step 1/2. In terms of biological role, catalyzes the formation of 6,7-dimethyl-8-ribityllumazine by condensation of 5-amino-6-(D-ribitylamino)uracil with 3,4-dihydroxy-2-butanone 4-phosphate. This is the penultimate step in the biosynthesis of riboflavin. The polypeptide is 6,7-dimethyl-8-ribityllumazine synthase (Moorella thermoacetica (strain ATCC 39073 / JCM 9320)).